A 326-amino-acid chain; its full sequence is Organic solute transporter subunit alpha (326 aa).

The Extracellular segment spans residues 1–28 (METSNFTLFDPRCRAEAPFAIDAIKQLD). N5 carries an N-linked (GlcNAc...) asparagine glycan. The chain crosses the membrane as a helical span at residues 29–49 (IFGKVLYTVLTLMATASMLVF). Residues 50 to 67 (IEECIYIYKKVPAHKKST) lie on the Cytoplasmic side of the membrane. Residues 68-88 (IIWVTGVAPVMAIMSCLGMWV) traverse the membrane as a helical segment. At 89-99 (PRATMFTDMTS) the chain is on the extracellular side. A helical membrane pass occupies residues 100–120 (ATYFAIVVFKFLILMIEEVGG). Residues 121–161 (DNAFLRRCEKQTFKISTGPCCCCCPCLPNVPITRRSLFILK) lie on the Cytoplasmic side of the membrane. Residues 162–182 (LGSYQFALMKLVLTIFSIVLW) traverse the membrane as a helical segment. Topologically, residues 183 to 198 (TNGSFSLTNVSASGAA) are extracellular. N184 and N191 each carry an N-linked (GlcNAc...) asparagine glycan. The helical transmembrane segment at 199–219 (IWINSFIGVLTIIALWPVAIM) threads the bilayer. The Cytoplasmic segment spans residues 220–237 (FMHVREALRTLKIVPKYA). Residues 238-258 (MYQLVLILSQLQTAIINILAL) form a helical membrane-spanning segment. An N-linked (GlcNAc...) asparagine glycan is attached at N259. Residues 259 to 275 (NGTIACSPPYSSQARGY) lie on the Extracellular side of the membrane. The helical transmembrane segment at 276–296 (MMSQQLLIVEMFIITLVTRVL) threads the bilayer. The Cytoplasmic portion of the chain corresponds to 297-326 (YRRQYEPIPEPDDVEEKKTVLSSKKAIDVA).

It belongs to the OST-alpha family. As to quaternary structure, interacts with slc51b. The Ost-alpha/Ost-beta complex is a heterodimer composed of alpha (slc51a) and beta (slc51b) subunit.

It localises to the cell membrane. It is found in the endoplasmic reticulum membrane. It carries out the reaction taurocholate(out) = taurocholate(in). It catalyses the reaction prostaglandin E2(out) = prostaglandin E2(in). The catalysed reaction is estrone 3-sulfate(out) = estrone 3-sulfate(in). The enzyme catalyses dehydroepiandrosterone 3-sulfate(out) = dehydroepiandrosterone 3-sulfate(in). It carries out the reaction tauroursodeoxycholate(out) = tauroursodeoxycholate(in). It catalyses the reaction glycoursodeoxycholate(out) = glycoursodeoxycholate(in). The catalysed reaction is glycocholate(out) = glycocholate(in). The enzyme catalyses taurochenodeoxycholate(out) = taurochenodeoxycholate(in). It carries out the reaction glycochenodeoxycholate(out) = glycochenodeoxycholate(in). It catalyses the reaction taurodeoxycholate(out) = taurodeoxycholate(in). The catalysed reaction is glycodeoxycholate(out) = glycodeoxycholate(in). Essential component of the Ost-alpha/Ost-beta complex, a heterodimer that acts as the intestinal basolateral transporter responsible for the translocation of bile acids (such as taurocholate), steroids (such as estrone sulfate), and eicosanoids (such as prostaglandin E2). The sequence is that of Organic solute transporter subunit alpha (slc51a) from Danio rerio (Zebrafish).